The sequence spans 59 residues: Single-pass membrane and coiled-coil domain-containing protein 4 (59 aa).

Residues 1–23 (MRQLKGKPKKETSKDKRERKQAM) are disordered. Residues 9–23 (KKETSKDKRERKQAM) are compositionally biased toward basic and acidic residues. A coiled-coil region spans residues 9–30 (KKETSKDKRERKQAMQDARKQV). A helical membrane pass occupies residues 32–52 (TVVLPTVAVVVLLIVFFVYAA).

This sequence belongs to the SMCO4 family.

Its subcellular location is the membrane. This is Single-pass membrane and coiled-coil domain-containing protein 4 (smco4) from Takifugu rubripes (Japanese pufferfish).